The following is a 316-amino-acid chain: tRNA dimethylallyltransferase (316 aa).

Position 17-24 (17-24 (GPTASGKT)) interacts with ATP. Substrate is bound at residue 19–24 (TASGKT). Interaction with substrate tRNA regions lie at residues 42-45 (DSAL), 166-170 (QRLSR), and 247-252 (RCVGYR).

The protein belongs to the IPP transferase family. Monomer. It depends on Mg(2+) as a cofactor.

It carries out the reaction adenosine(37) in tRNA + dimethylallyl diphosphate = N(6)-dimethylallyladenosine(37) in tRNA + diphosphate. Its function is as follows. Catalyzes the transfer of a dimethylallyl group onto the adenine at position 37 in tRNAs that read codons beginning with uridine, leading to the formation of N6-(dimethylallyl)adenosine (i(6)A). The protein is tRNA dimethylallyltransferase of Citrobacter koseri (strain ATCC BAA-895 / CDC 4225-83 / SGSC4696).